Here is a 199-residue protein sequence, read N- to C-terminus: Recombination protein RecR (199 aa).

Residues 58-73 (CRICYNITDTEVCNIC) form a C4-type zinc finger. Residues 81–176 (SLICVVSHPM…KVTRIAHGVP (96 aa)) form the Toprim domain.

It belongs to the RecR family.

Functionally, may play a role in DNA repair. It seems to be involved in an RecBC-independent recombinational process of DNA repair. It may act with RecF and RecO. This Thermoanaerobacter sp. (strain X514) protein is Recombination protein RecR.